Reading from the N-terminus, the 774-residue chain is Transforming acidic coiled-coil-containing protein 1 (774 aa).

The residue at position 2 (Ala2) is an N-acetylalanine. The tract at residues Ala2 to Ser56 is interaction with LSM7 and SNRPG. Phosphoserine occurs at positions 4, 10, and 45. Residues Ala21–His142 are disordered. Residues Gly28–Gln46 are compositionally biased toward acidic residues. The segment covering Glu48–Asn61 has biased composition (polar residues). Basic and acidic residues predominate over residues Pro88 to Asp99. Residues Asp113–Val128 are compositionally biased toward polar residues. A compositionally biased stretch (basic and acidic residues) spans His131 to His142. 2 positions are modified to phosphoserine: Ser148 and Ser154. Residues Phe153–Leu255 are interaction with TDRD7. The segment at Glu207–Asp424 is interaction with YEATS4. The segment at Leu214–Pro428 is disordered. SPAZ domains are found at residues Thr216–Val294 and Ser354–Glu504. Residue Ser228 is modified to Phosphoserine; by AURKC. Over residues Ser228 to Lys241 the composition is skewed to basic residues. 2 positions are modified to phosphoserine: Ser376 and Ser401. Positions Ile397–Lys407 are enriched in polar residues. A Bipartite nuclear localization signal motif is present at residues Pro452–Lys468. Phosphoserine is present on residues Ser480 and Ser560. The stretch at Ile579–Asp774 forms a coiled coil. Positions Val670–Asp774 are interaction with CH-TOG.

The protein belongs to the TACC family. As to quaternary structure, interacts with CH-TOG and YEATS4. Interacts with the AURKA and AURKB and AURKC. Interacts with LSM7, TDRD7 and SNRPG. Interacts with GCN5L2 and PCAF. Interacts with the thyroid hormone receptors THRB and THRA, predominantly with isoform alpha-2. The interaction with THRA isoform alpha-1 and THRB is decreased in the presence of thyroid hormone T3. Interacts with RARA in the nucleus. Also interacts with other nuclear receptors, including ESR1, NR3C1, PPARG and RXRA, preferentially in the absence of their hormonal ligands.

Its subcellular location is the cytoplasm. It localises to the nucleus. The protein localises to the cytoskeleton. It is found in the microtubule organizing center. The protein resides in the centrosome. Its subcellular location is the midbody. Its function is as follows. Involved in transcription regulation induced by nuclear receptors, including in T3 thyroid hormone and all-trans retinoic acid pathways. Might promote the nuclear localization of the receptors. Likely involved in the processes that promote cell division prior to the formation of differentiated tissues. This Mus musculus (Mouse) protein is Transforming acidic coiled-coil-containing protein 1 (Tacc1).